Reading from the N-terminus, the 255-residue chain is Phycoerythrobilin:ferredoxin oxidoreductase (255 aa).

It belongs to the HY2 family.

The catalysed reaction is (3Z)-phycoerythrobilin + oxidized 2[4Fe-4S]-[ferredoxin] = 15,16-dihydrobiliverdin + reduced 2[4Fe-4S]-[ferredoxin] + 2 H(+). Functionally, catalyzes the two-electron reduction of the C2 and C3(1) diene system of 15,16-dihydrobiliverdin. The chain is Phycoerythrobilin:ferredoxin oxidoreductase (pebB) from Nostoc punctiforme (strain ATCC 29133 / PCC 73102).